We begin with the raw amino-acid sequence, 400 residues long: ATP-dependent RNA helicase fal-1 (400 aa).

The short motif at 26–54 (PTFESMSLKESLLRGIYAYGYESPSAVQS) is the Q motif element. The Helicase ATP-binding domain maps to 57 to 227 (IVQICKGRDT…TKFMTDPVRI (171 aa)). 70–77 (AQSGTGKT) provides a ligand contact to ATP. The DEAD box motif lies at 175–178 (DEAD). A Helicase C-terminal domain is found at 238-399 (GLKQYFIAVE…EMPMNVADLI (162 aa)).

It belongs to the DEAD box helicase family. DDX48/FAL1 subfamily.

Its subcellular location is the nucleus. The protein resides in the nucleolus. The catalysed reaction is ATP + H2O = ADP + phosphate + H(+). Its function is as follows. ATP-dependent RNA helicase involved in 40S ribosomal subunit biogenesis. Required for the processing and cleavage of 35S pre-rRNA at sites A0, A1, and A2, leading to mature 18S rRNA. This is ATP-dependent RNA helicase fal-1 (fal-1) from Neurospora crassa (strain ATCC 24698 / 74-OR23-1A / CBS 708.71 / DSM 1257 / FGSC 987).